Consider the following 193-residue polypeptide: Phosphoheptose isomerase (193 aa).

One can recognise an SIS domain in the interval 37-193; sequence LADSFKAGGK…QLIEKEMVKA (157 aa). 52 to 54 is a substrate binding site; that stretch reads NGG. 2 residues coordinate Zn(2+): His61 and Glu65. Substrate-binding positions include Glu65, 93–94, 119–121, Ser124, and Gln172; these read ND and STS. Positions 172 and 180 each coordinate Zn(2+).

Belongs to the SIS family. GmhA subfamily. Homotetramer. The cofactor is Zn(2+).

The protein resides in the cytoplasm. The catalysed reaction is 2 D-sedoheptulose 7-phosphate = D-glycero-alpha-D-manno-heptose 7-phosphate + D-glycero-beta-D-manno-heptose 7-phosphate. The protein operates within carbohydrate biosynthesis; D-glycero-D-manno-heptose 7-phosphate biosynthesis; D-glycero-alpha-D-manno-heptose 7-phosphate and D-glycero-beta-D-manno-heptose 7-phosphate from sedoheptulose 7-phosphate: step 1/1. Functionally, catalyzes the isomerization of sedoheptulose 7-phosphate in D-glycero-D-manno-heptose 7-phosphate. This Yersinia enterocolitica serotype O:8 / biotype 1B (strain NCTC 13174 / 8081) protein is Phosphoheptose isomerase.